The chain runs to 546 residues: Chaperonin GroEL (546 aa).

Residues 30–33 (TLGP), lysine 51, 87–91 (DGTTT), glycine 415, and aspartate 495 contribute to the ATP site.

Belongs to the chaperonin (HSP60) family. Forms a cylinder of 14 subunits composed of two heptameric rings stacked back-to-back. Interacts with the co-chaperonin GroES.

Its subcellular location is the cytoplasm. The catalysed reaction is ATP + H2O + a folded polypeptide = ADP + phosphate + an unfolded polypeptide.. Its function is as follows. Together with its co-chaperonin GroES, plays an essential role in assisting protein folding. The GroEL-GroES system forms a nano-cage that allows encapsulation of the non-native substrate proteins and provides a physical environment optimized to promote and accelerate protein folding. The sequence is that of Chaperonin GroEL from Brucella anthropi (strain ATCC 49188 / DSM 6882 / CCUG 24695 / JCM 21032 / LMG 3331 / NBRC 15819 / NCTC 12168 / Alc 37) (Ochrobactrum anthropi).